The primary structure comprises 143 residues: Large ribosomal subunit protein uL15 (143 aa).

Residues 1–54 (MELNSIKPADGAKHAARRVGRGIGSGLGKTAGRGHKGQKSRSGGYHKVGFEGGQ) are disordered. The segment covering 21–31 (RGIGSGLGKTA) has biased composition (gly residues).

It belongs to the universal ribosomal protein uL15 family. In terms of assembly, part of the 50S ribosomal subunit.

Functionally, binds to the 23S rRNA. The polypeptide is Large ribosomal subunit protein uL15 (Acidovorax ebreus (strain TPSY) (Diaphorobacter sp. (strain TPSY))).